The chain runs to 591 residues: Probable sulfoacetaldehyde acetyltransferase (591 aa).

A disordered region spans residues 359–383 (MDHEDDDPGTEWNVGARQREPDRMS).

It belongs to the TPP enzyme family. The cofactor is Mg(2+). Thiamine diphosphate is required as a cofactor.

It localises to the cytoplasm. It carries out the reaction acetyl phosphate + sulfite + H(+) = sulfoacetaldehyde + phosphate. Its pathway is organosulfur degradation; taurine degradation via aerobic pathway; acetyl phosphate and sulfite from taurine: step 2/2. The polypeptide is Probable sulfoacetaldehyde acetyltransferase (xsc) (Rhizobium meliloti (strain 1021) (Ensifer meliloti)).